We begin with the raw amino-acid sequence, 201 residues long: Ras-related protein Rab-1C (201 aa).

Positions 1 to 20 (MGCSPSKEGNGSFSSTSTSF) are disordered. The N-myristoyl glycine moiety is linked to residue G2. The S-palmitoyl cysteine moiety is linked to residue C3. Residues 40–48 (GDSGVGKSC), 58–65 (FTDSYIST), 88–92 (DTAGQ), 146–149 (NKCD), and 176–178 (SAK) each bind GTP. The Effector region signature appears at 62 to 70 (YISTIGVDF).

This sequence belongs to the small GTPase superfamily. Rab family. Although this sequence lacks the C-terminal cysteine motifs subject to isoprenylation in other Rab proteins, it does have N-terminal myristoylation and S-palmitoylation sequence motifs.

The protein is Ras-related protein Rab-1C (Rab1C) of Dictyostelium discoideum (Social amoeba).